Reading from the N-terminus, the 298-residue chain is Beta-soluble NSF attachment protein (298 aa).

This sequence belongs to the SNAP family. In terms of assembly, interacts with PRKCABP, and disrupts the interaction between GRIA2 and PRKCABP, leading to the internalization of GRIA2.

The protein localises to the membrane. In terms of biological role, required for vesicular transport between the endoplasmic reticulum and the Golgi apparatus. This chain is Beta-soluble NSF attachment protein (NAPB), found in Homo sapiens (Human).